The following is a 145-amino-acid chain: Large-conductance mechanosensitive channel (145 aa).

A run of 3 helical transmembrane segments spans residues 14–34 (VMDLAVGVIIGGAFGGIVKSL), 38–58 (LIMPIVGAIFGGFDFSNYFLP), and 81–101 (GSFLTVLINFLILAWIIFLMV).

Belongs to the MscL family. As to quaternary structure, homopentamer.

It localises to the cell inner membrane. Functionally, channel that opens in response to stretch forces in the membrane lipid bilayer. May participate in the regulation of osmotic pressure changes within the cell. This is Large-conductance mechanosensitive channel from Rhizobium johnstonii (strain DSM 114642 / LMG 32736 / 3841) (Rhizobium leguminosarum bv. viciae).